A 561-amino-acid chain; its full sequence is SH3 domain-binding protein 2 (561 aa).

The PH domain occupies 26-130; that stretch reads GVAKAGYLHK…WMALLRREIG (105 aa). Disordered stretches follow at residues 160–316 and 333–451; these read VDIS…GACS and KLKS…YEKV. Residues 170 to 188 show a composition bias toward acidic residues; it reads DNEDYEHDDEDDSYLEPDS. 2 positions are modified to phosphotyrosine; by SYK: Tyr174 and Tyr183. An SH3-binding motif is present at residues 201 to 210; it reads PPAYPPPPVP. 2 stretches are compositionally biased toward pro residues: residues 202-213 and 233-242; these read PAYPPPPVPTPR and PLLPPPPPKH. Over residues 252–266 the composition is skewed to basic and acidic residues; it reads EDSKRDPLCPRRAEP. Ser278 bears the Phosphoserine mark. The span at 342-354 shows a compositional bias: pro residues; that stretch reads RGPPTSEPPPVPA. Phosphoserine occurs at positions 416 and 427. Tyr448 bears the Phosphotyrosine; by SYK mark. An SH2 domain is found at 457-555; sequence VFVNTTESCE…HQSLLLRHPY (99 aa).

Post-translationally, phosphorylated. Phosphorylation at Tyr-448 may stimulate the activity of the LYN kinase. In terms of tissue distribution, expressed in a variety of tissues including lung, liver, skeletal muscle, kidney and pancreas.

Its function is as follows. Binds differentially to the SH3 domains of certain proteins of signal transduction pathways. Binds to phosphatidylinositols; linking the hemopoietic tyrosine kinase fes to the cytoplasmic membrane in a phosphorylation dependent mechanism. The polypeptide is SH3 domain-binding protein 2 (SH3BP2) (Homo sapiens (Human)).